The following is a 315-amino-acid chain: UDP-N-acetylenolpyruvoylglucosamine reductase (315 aa).

One can recognise an FAD-binding PCMH-type domain in the interval 27-207; it reads RVGGPADVLY…TKRMNAITAR (181 aa). Arg-172 is a catalytic residue. The tract at residues 214–236 is disordered; sequence IREKTSGSTFANPDPPGTPNQRK. The Proton donor role is filled by Ser-221. Residue Glu-297 is part of the active site.

Belongs to the MurB family. FAD is required as a cofactor.

Its subcellular location is the cytoplasm. The enzyme catalyses UDP-N-acetyl-alpha-D-muramate + NADP(+) = UDP-N-acetyl-3-O-(1-carboxyvinyl)-alpha-D-glucosamine + NADPH + H(+). It functions in the pathway cell wall biogenesis; peptidoglycan biosynthesis. Cell wall formation. The sequence is that of UDP-N-acetylenolpyruvoylglucosamine reductase from Maricaulis maris (strain MCS10) (Caulobacter maris).